Consider the following 301-residue polypeptide: Homoserine O-acetyltransferase (301 aa).

The active-site Acyl-thioester intermediate is the C142. The substrate site is built by K163 and S192. The Proton acceptor role is filled by H235. E237 is an active-site residue. R249 lines the substrate pocket.

The protein belongs to the MetA family.

Its subcellular location is the cytoplasm. It catalyses the reaction L-homoserine + acetyl-CoA = O-acetyl-L-homoserine + CoA. It functions in the pathway amino-acid biosynthesis; L-methionine biosynthesis via de novo pathway; O-acetyl-L-homoserine from L-homoserine: step 1/1. In terms of biological role, transfers an acetyl group from acetyl-CoA to L-homoserine, forming acetyl-L-homoserine. This Bacillus mycoides (strain KBAB4) (Bacillus weihenstephanensis) protein is Homoserine O-acetyltransferase.